A 1473-amino-acid polypeptide reads, in one-letter code: DNA topoisomerase 2 (1473 aa).

Residues 1–20 are disordered; sequence MATKLPLQNSNAANVAKAPA. Residues 9 to 20 are compositionally biased toward low complexity; the sequence is NSNAANVAKAPA. Residues N91, N120, 148–150, and 161–168 each bind ATP; these read SSN and GRNGYGAK. Residues 345-347 are interaction with DNA; sequence NKK. 378–380 provides a ligand contact to ATP; the sequence is QTK. A Toprim domain is found at 455–569; that stretch reads CTLILTEGDS…SLLQVPSFLV (115 aa). The Mg(2+) site is built by E461, D538, and D540. Residues 704-1163 form the Topo IIA-type catalytic domain; the sequence is IPSMVDGLKP…TPKSLWLSDL (460 aa). Y794 functions as the O-(5'-phospho-DNA)-tyrosine intermediate in the catalytic mechanism. The tract at residues 980-989 is interaction with DNA; the sequence is KLTTTIATSN. Disordered stretches follow at residues 1195-1230, 1242-1297, and 1313-1473; these read SGAA…SYSA, KPKA…EVEE, and GSAP…EDDE. 2 stretches are compositionally biased toward basic residues: residues 1200 to 1216 and 1278 to 1288; these read KVKR…KTTK and PKGRQGAKKKA. Positions 1351–1360 are enriched in low complexity; that stretch reads KPAATKAAKP. Composition is skewed to polar residues over residues 1394–1404 and 1417–1427; these read SPFNKKSSSVM and ENVAGNSSSEK. Positions 1453–1473 are enriched in acidic residues; sequence SESESANDSEFDDIEDDEDDE.

It belongs to the type II topoisomerase family. Homodimer. The cofactor is Mg(2+). Mn(2+) is required as a cofactor. Requires Ca(2+) as cofactor.

It catalyses the reaction ATP-dependent breakage, passage and rejoining of double-stranded DNA.. Functionally, control of topological states of DNA by transient breakage and subsequent rejoining of DNA strands. Topoisomerase II makes double-strand breaks. In Arabidopsis thaliana (Mouse-ear cress), this protein is DNA topoisomerase 2 (TOP2).